Consider the following 592-residue polypeptide: Potassium-transporting ATPase potassium-binding subunit (592 aa).

10 helical membrane-spanning segments follow: residues 7–27 (ILLG…GTYI), 60–80 (LKYA…VYAL), 132–152 (ALAV…IALI), 175–195 (LHVL…QGVI), 279–299 (LSNF…CFTF), 310–330 (WAVL…AMHF), 409–429 (GLYG…LMIG), 449–469 (IAIL…VMLA), 513–533 (VMLG…VLAI), and 556–576 (LFVT…YVPA).

This sequence belongs to the KdpA family. The system is composed of three essential subunits: KdpA, KdpB and KdpC.

It is found in the cell inner membrane. Its function is as follows. Part of the high-affinity ATP-driven potassium transport (or Kdp) system, which catalyzes the hydrolysis of ATP coupled with the electrogenic transport of potassium into the cytoplasm. This subunit binds the periplasmic potassium ions and delivers the ions to the membrane domain of KdpB through an intramembrane tunnel. In Dechloromonas aromatica (strain RCB), this protein is Potassium-transporting ATPase potassium-binding subunit.